We begin with the raw amino-acid sequence, 780 residues long: MDPSAWAICCLLGSLLFHVGIPSPGPSPSVPRLRLSYRDLLSTNRSAIFLGPRGSLDLQVMYLDEYRDRLFLGSRDALYSLRLDQAWPDPREVLWLPQPGQKVECVRKGKDPLTECANFVRVLQPHNRTHLLACGTGAFQPICTFITVGHRGEHVLRLDASSVENGRGRCPHEPSRPFASTFVGGELYTGLTADFLGREAMIFRSGGPRPALRSDSDQSLLHEPRFVMAARIPDNSDRDDDKVYFFFSETVPSPDGGPGHVTISRVGRVCVNDAGGQRVLVNKWSTFLKARLVCSVPGPGGAETHFDQLEDVFLLWPKAGKSLEVYALFSTVSAVFQGFAVCVYHMVDIWEVFNGPFAHRDGPQHQWGPYGGKVPFPRPGVCPSKMTAQPGRPFGSTKDYPDEVLQFVRDHPLMFQPVRPRRGRPVLVKTHLAQRLRQIVVDRVEAEDGTYDVIFLGTDSGSVLKVIALQGGGLTEPEEVVLEELQVFKVPTPITEMEISVKRQTLYVGSPLGVARLQLHQCETYGSACAECCLARDPYCAWDGTACARYRPSSGKRRFRRQDIRHGNPAVQCLGQGQSQNKAASGLMTRVFGTEHNSTFLECLPKSPQAAVRWFLQRPGDKGTDQVKTDERVVQTAQGLLFRRLSRHDAGNYTCTTLEHGFSQTVVRFALEVIAAVQLDSLFLRESRLEEPSAWGSLASASPKTWYKDILQLTGFANLPRVDEYCERVWCRGVGERSGSFRGKGKQAKGKSWAGLELGKKMKSRVLAEHNRTPREVEAT.

Residues 1-22 (MDPSAWAICCLLGSLLFHVGIP) form the signal peptide. Positions 32–519 (RLRLSYRDLL…SPLGVARLQL (488 aa)) constitute a Sema domain. N44 is a glycosylation site (N-linked (GlcNAc...) asparagine). A disulfide bridge links C105 with C116. N127 carries an N-linked (GlcNAc...) asparagine glycan. Cystine bridges form between C134-C143, C270-C382, C294-C342, C522-C540, and C603-C655. One can recognise an Ig-like C2-type domain in the interval 569 to 671 (PAVQCLGQGQ…FSQTVVRFAL (103 aa)). N652 is a glycosylation site (N-linked (GlcNAc...) asparagine).

Belongs to the semaphorin family. Highly expressed in lung and kidney. Weakly expressed in brain.

The protein resides in the secreted. In terms of biological role, has chemorepulsive activities for sympathetic axons. Ligand of NRP2. The sequence is that of Semaphorin-3G (Sema3g) from Mus musculus (Mouse).